We begin with the raw amino-acid sequence, 428 residues long: Trigger factor (428 aa).

Positions 163-248 constitute a PPIase FKBP-type domain; sequence GDMVIIDYKG…IHEIKEKEVP (86 aa).

This sequence belongs to the FKBP-type PPIase family. Tig subfamily.

The protein localises to the cytoplasm. The catalysed reaction is [protein]-peptidylproline (omega=180) = [protein]-peptidylproline (omega=0). Functionally, involved in protein export. Acts as a chaperone by maintaining the newly synthesized protein in an open conformation. Functions as a peptidyl-prolyl cis-trans isomerase. The sequence is that of Trigger factor from Alkaliphilus oremlandii (strain OhILAs) (Clostridium oremlandii (strain OhILAs)).